The sequence spans 191 residues: Elongation factor P (191 aa).

It belongs to the elongation factor P family.

The protein localises to the cytoplasm. Its pathway is protein biosynthesis; polypeptide chain elongation. Functionally, involved in peptide bond synthesis. Stimulates efficient translation and peptide-bond synthesis on native or reconstituted 70S ribosomes in vitro. Probably functions indirectly by altering the affinity of the ribosome for aminoacyl-tRNA, thus increasing their reactivity as acceptors for peptidyl transferase. The sequence is that of Elongation factor P from Ralstonia pickettii (strain 12J).